The primary structure comprises 140 residues: MLKEFQEFISKGNVMDLAVGVIIGAAFGKIVTSLVDDVIMPIFGAIFGGLDFNNYYIGLSSAVNATSLAEAKKQGAVFAYGSFITAVLNFLILAFIIFLMVKAVNNLRRRLEREKPAAPAAPPPADVALLTEIRDLLAKR.

The next 3 membrane-spanning stretches (helical) occupy residues 8–28 (FISK…AAFG), 30–50 (IVTS…FGGL), and 81–101 (GSFI…FLMV).

Belongs to the MscL family. As to quaternary structure, homopentamer.

The protein resides in the cell inner membrane. Functionally, channel that opens in response to stretch forces in the membrane lipid bilayer. May participate in the regulation of osmotic pressure changes within the cell. This chain is Large-conductance mechanosensitive channel 3, found in Mesorhizobium japonicum (strain LMG 29417 / CECT 9101 / MAFF 303099) (Mesorhizobium loti (strain MAFF 303099)).